We begin with the raw amino-acid sequence, 200 residues long: Probable GTP-binding protein EngB (200 aa).

The 174-residue stretch at 22–195 (GKDEIAFVGR…INNICSGINY (174 aa)) folds into the EngB-type G domain. GTP is bound by residues 30-37 (GRSNVGKS), 57-61 (GKTRL), 75-78 (DLPG), 142-145 (TKSD), and 174-176 (FSS). The Mg(2+) site is built by Ser-37 and Thr-59.

This sequence belongs to the TRAFAC class TrmE-Era-EngA-EngB-Septin-like GTPase superfamily. EngB GTPase family. Mg(2+) is required as a cofactor.

Necessary for normal cell division and for the maintenance of normal septation. In Clostridium acetobutylicum (strain ATCC 824 / DSM 792 / JCM 1419 / IAM 19013 / LMG 5710 / NBRC 13948 / NRRL B-527 / VKM B-1787 / 2291 / W), this protein is Probable GTP-binding protein EngB.